The primary structure comprises 101 residues: Large ribosomal subunit protein eL43 (101 aa).

Zn(2+) contacts are provided by C40, C43, C59, and C62. The C4-type zinc finger occupies 40–62; the sequence is CPSCRSLVRLERIAFGIWRCPKC.

This sequence belongs to the eukaryotic ribosomal protein eL43 family. Putative zinc-binding subfamily. As to quaternary structure, part of the 50S ribosomal subunit. Requires Zn(2+) as cofactor.

Functionally, binds to the 23S rRNA. This Pyrobaculum aerophilum (strain ATCC 51768 / DSM 7523 / JCM 9630 / CIP 104966 / NBRC 100827 / IM2) protein is Large ribosomal subunit protein eL43.